The primary structure comprises 221 residues: Probable hydrogenase maturation factor HypB (221 aa).

The tract at residues 35 to 196 is G-domain; that stretch reads AFDFMGAIGS…KRINPDAEVV (162 aa). Ni(2+) contacts are provided by Cys95 and His96. Cys95, His96, His100, His104, and Cys127 together coordinate Zn(2+). Ni(2+) is bound at residue Cys127.

The protein belongs to the SIMIBI class G3E GTPase family. HypB/HupM subfamily. As to quaternary structure, homodimer.

In terms of biological role, involved in the maturation of [NiFe] hydrogenases. Required for nickel insertion into the metal center of the hydrogenase. Exhibits a low intrinsic GTPase activity, which is essential for nickel insertion. The polypeptide is Probable hydrogenase maturation factor HypB (Methanocaldococcus jannaschii (strain ATCC 43067 / DSM 2661 / JAL-1 / JCM 10045 / NBRC 100440) (Methanococcus jannaschii)).